A 185-amino-acid polypeptide reads, in one-letter code: Ribosome-recycling factor (185 aa).

Residues 142-164 are compositionally biased toward basic and acidic residues; the sequence is IKKDGDAGEDDVTRAEKDLDKST. Residues 142 to 173 are disordered; the sequence is IKKDGDAGEDDVTRAEKDLDKSTHQYTSQVDD.

This sequence belongs to the RRF family.

The protein localises to the cytoplasm. Its function is as follows. Responsible for the release of ribosomes from messenger RNA at the termination of protein biosynthesis. May increase the efficiency of translation by recycling ribosomes from one round of translation to another. The sequence is that of Ribosome-recycling factor from Mycolicibacterium gilvum (strain PYR-GCK) (Mycobacterium gilvum (strain PYR-GCK)).